The following is a 429-amino-acid chain: Bifunctional protein GlmU (429 aa).

Residues 1–223 (MKTSILILAA…EDEFMGINDK (223 aa)) form a pyrophosphorylase region. Residues 8-11 (LAAG), lysine 22, and 81-82 (GT) contribute to the UDP-N-acetyl-alpha-D-glucosamine site. Position 102 (aspartate 102) interacts with Mg(2+). UDP-N-acetyl-alpha-D-glucosamine contacts are provided by glycine 135, glutamate 149, asparagine 164, and asparagine 221. Asparagine 221 serves as a coordination point for Mg(2+). The tract at residues 224–244 (FELSIAENFMQEKIKKYWMQQ) is linker. The N-acetyltransferase stretch occupies residues 245–429 (GVIFHLPQST…KDYYYKKFQK (185 aa)). Arginine 308 and lysine 325 together coordinate UDP-N-acetyl-alpha-D-glucosamine. Histidine 336 serves as the catalytic Proton acceptor. UDP-N-acetyl-alpha-D-glucosamine contacts are provided by tyrosine 339 and asparagine 350. Residues 359-360 (NY), serine 378, alanine 396, and arginine 413 each bind acetyl-CoA.

It in the N-terminal section; belongs to the N-acetylglucosamine-1-phosphate uridyltransferase family. The protein in the C-terminal section; belongs to the transferase hexapeptide repeat family. As to quaternary structure, homotrimer. The cofactor is Mg(2+).

It localises to the cytoplasm. It catalyses the reaction alpha-D-glucosamine 1-phosphate + acetyl-CoA = N-acetyl-alpha-D-glucosamine 1-phosphate + CoA + H(+). The enzyme catalyses N-acetyl-alpha-D-glucosamine 1-phosphate + UTP + H(+) = UDP-N-acetyl-alpha-D-glucosamine + diphosphate. It functions in the pathway nucleotide-sugar biosynthesis; UDP-N-acetyl-alpha-D-glucosamine biosynthesis; N-acetyl-alpha-D-glucosamine 1-phosphate from alpha-D-glucosamine 6-phosphate (route II): step 2/2. It participates in nucleotide-sugar biosynthesis; UDP-N-acetyl-alpha-D-glucosamine biosynthesis; UDP-N-acetyl-alpha-D-glucosamine from N-acetyl-alpha-D-glucosamine 1-phosphate: step 1/1. The protein operates within bacterial outer membrane biogenesis; LPS lipid A biosynthesis. In terms of biological role, catalyzes the last two sequential reactions in the de novo biosynthetic pathway for UDP-N-acetylglucosamine (UDP-GlcNAc). The C-terminal domain catalyzes the transfer of acetyl group from acetyl coenzyme A to glucosamine-1-phosphate (GlcN-1-P) to produce N-acetylglucosamine-1-phosphate (GlcNAc-1-P), which is converted into UDP-GlcNAc by the transfer of uridine 5-monophosphate (from uridine 5-triphosphate), a reaction catalyzed by the N-terminal domain. This chain is Bifunctional protein GlmU, found in Campylobacter jejuni subsp. jejuni serotype O:23/36 (strain 81-176).